We begin with the raw amino-acid sequence, 404 residues long: Argininosuccinate synthase (404 aa).

ATP is bound by residues 10–18 (AYSGGVDTS) and A38. L-citrulline is bound at residue Y89. G119 is an ATP binding site. L-aspartate-binding residues include T121, N125, and D126. Residue N125 participates in L-citrulline binding. 5 residues coordinate L-citrulline: R129, S177, S186, E262, and Y274.

The protein belongs to the argininosuccinate synthase family. Type 1 subfamily. In terms of assembly, homotetramer.

The protein resides in the cytoplasm. The catalysed reaction is L-citrulline + L-aspartate + ATP = 2-(N(omega)-L-arginino)succinate + AMP + diphosphate + H(+). The protein operates within amino-acid biosynthesis; L-arginine biosynthesis; L-arginine from L-ornithine and carbamoyl phosphate: step 2/3. This Prochlorococcus marinus (strain AS9601) protein is Argininosuccinate synthase.